The primary structure comprises 447 residues: Glutamyl-tRNA(Gln) amidotransferase subunit A (447 aa).

Catalysis depends on charge relay system residues lysine 51 and serine 126. The active-site Acyl-ester intermediate is serine 150.

This sequence belongs to the amidase family. GatA subfamily. As to quaternary structure, heterotrimer of A, B and C subunits.

It carries out the reaction L-glutamyl-tRNA(Gln) + L-glutamine + ATP + H2O = L-glutaminyl-tRNA(Gln) + L-glutamate + ADP + phosphate + H(+). In terms of biological role, allows the formation of correctly charged Gln-tRNA(Gln) through the transamidation of misacylated Glu-tRNA(Gln) in organisms which lack glutaminyl-tRNA synthetase. The reaction takes place in the presence of glutamine and ATP through an activated gamma-phospho-Glu-tRNA(Gln). This Helicobacter hepaticus (strain ATCC 51449 / 3B1) protein is Glutamyl-tRNA(Gln) amidotransferase subunit A.